The following is a 403-amino-acid chain: Tryptophan synthase beta chain (403 aa).

Residue lysine 96 is modified to N6-(pyridoxal phosphate)lysine.

The protein belongs to the TrpB family. Tetramer of two alpha and two beta chains. Requires pyridoxal 5'-phosphate as cofactor.

It catalyses the reaction (1S,2R)-1-C-(indol-3-yl)glycerol 3-phosphate + L-serine = D-glyceraldehyde 3-phosphate + L-tryptophan + H2O. It participates in amino-acid biosynthesis; L-tryptophan biosynthesis; L-tryptophan from chorismate: step 5/5. Its function is as follows. The beta subunit is responsible for the synthesis of L-tryptophan from indole and L-serine. This Ralstonia nicotianae (strain ATCC BAA-1114 / GMI1000) (Ralstonia solanacearum) protein is Tryptophan synthase beta chain.